The chain runs to 185 residues: Ribosome-recycling factor (185 aa).

The protein belongs to the RRF family.

The protein localises to the cytoplasm. In terms of biological role, responsible for the release of ribosomes from messenger RNA at the termination of protein biosynthesis. May increase the efficiency of translation by recycling ribosomes from one round of translation to another. The sequence is that of Ribosome-recycling factor from Lactococcus lactis subsp. cremoris (strain SK11).